A 160-amino-acid polypeptide reads, in one-letter code: Ribosomal RNA large subunit methyltransferase H (160 aa).

2 residues coordinate S-adenosyl-L-methionine: L76 and G108.

This sequence belongs to the RNA methyltransferase RlmH family. Homodimer.

Its subcellular location is the cytoplasm. The catalysed reaction is pseudouridine(1915) in 23S rRNA + S-adenosyl-L-methionine = N(3)-methylpseudouridine(1915) in 23S rRNA + S-adenosyl-L-homocysteine + H(+). Functionally, specifically methylates the pseudouridine at position 1915 (m3Psi1915) in 23S rRNA. The polypeptide is Ribosomal RNA large subunit methyltransferase H (Nitrobacter winogradskyi (strain ATCC 25391 / DSM 10237 / CIP 104748 / NCIMB 11846 / Nb-255)).